Consider the following 266-residue polypeptide: Phosphatidylglycerol--prolipoprotein diacylglyceryl transferase (266 aa).

The next 7 helical transmembrane spans lie at 17–37 (LKIHWYGLMYLIGIGGAWLLA), 56–76 (LVFWVACGVILGGRLGYVLFY), 92–112 (WKGGMSFHGGLLGVMLAVWWF), 120–140 (FFQLMDFIAPLVPIGLGAGRI), 171–191 (PSQLYQFALEGVALFVILWLF), 199–219 (ASVSGLFVLCYGIFRFVVEFV), and 233–253 (WLTMGQVLCVPMVLAGIALMV). Residue arginine 139 coordinates a 1,2-diacyl-sn-glycero-3-phospho-(1'-sn-glycerol).

The protein belongs to the Lgt family.

It localises to the cell inner membrane. The enzyme catalyses L-cysteinyl-[prolipoprotein] + a 1,2-diacyl-sn-glycero-3-phospho-(1'-sn-glycerol) = an S-1,2-diacyl-sn-glyceryl-L-cysteinyl-[prolipoprotein] + sn-glycerol 1-phosphate + H(+). The protein operates within protein modification; lipoprotein biosynthesis (diacylglyceryl transfer). Functionally, catalyzes the transfer of the diacylglyceryl group from phosphatidylglycerol to the sulfhydryl group of the N-terminal cysteine of a prolipoprotein, the first step in the formation of mature lipoproteins. The protein is Phosphatidylglycerol--prolipoprotein diacylglyceryl transferase of Pseudomonas aeruginosa (strain UCBPP-PA14).